The sequence spans 138 residues: Hydrogenase maturation factor HypA (138 aa).

Histidine 2 serves as a coordination point for Ni(2+). Residues cysteine 73, cysteine 76, cysteine 110, and cysteine 113 each contribute to the Zn(2+) site.

This sequence belongs to the HypA/HybF family.

Functionally, involved in the maturation of [NiFe] hydrogenases. Required for nickel insertion into the metal center of the hydrogenase. The sequence is that of Hydrogenase maturation factor HypA from Thermococcus sibiricus (strain DSM 12597 / MM 739).